The chain runs to 793 residues: Kinesin-like protein KIN-14C (793 aa).

Positions 1 to 43 (MASRNQNRPPRSPNAKKEGLGGISFDKRRKVETQGGTGRRQAF) are disordered. Positions 1–69 (MASRNQNRPP…IEECGKVDFT (69 aa)) are globular. The span at 15–32 (AKKEGLGGISFDKRRKVE) shows a compositional bias: basic and acidic residues. Positions 120 to 375 (KENLKVSLES…EQQLAIANER (256 aa)) form a coiled coil. Positions 431-772 (NIRVFCRVRP…LRFAARVNAC (342 aa)) constitute a Kinesin motor domain. 516–523 (GQTGSGKT) provides a ligand contact to ATP.

This sequence belongs to the TRAFAC class myosin-kinesin ATPase superfamily. Kinesin family. KIN-14 subfamily.

The protein localises to the cytoplasm. It is found in the cytoskeleton. It localises to the spindle. The protein resides in the phragmoplast. Its subcellular location is the chromosome. The protein localises to the centromere. It is found in the kinetochore. In terms of biological role, kinesin that supports microtubule movement in an ATP-dependent manner and has a minus-end directed polarity. Plays a crucial role in spindle morphogenesis in male meiosis. In mitosis, is required for normal microtubule accumulation at the spindle poles during prophase and may play a role in spindle assembly during prometaphase. The chain is Kinesin-like protein KIN-14C from Arabidopsis thaliana (Mouse-ear cress).